The primary structure comprises 308 residues: GTPase Era (308 aa).

An Era-type G domain is found at Arg14–Pro181. Positions Gly22–Ser29 are G1. Gly22–Ser29 is a binding site for GTP. Residues Gln48–Ala52 form a G2 region. Positions Asp69–Gly72 are G3. Residues Asp69–Ile73 and Asn131–Asp134 contribute to the GTP site. The interval Asn131–Asp134 is G4. A G5 region spans residues Ile160–Ala162. Residues Leu212–Glu289 enclose the KH type-2 domain.

Belongs to the TRAFAC class TrmE-Era-EngA-EngB-Septin-like GTPase superfamily. Era GTPase family. In terms of assembly, monomer.

The protein localises to the cytoplasm. The protein resides in the cell inner membrane. In terms of biological role, an essential GTPase that binds both GDP and GTP, with rapid nucleotide exchange. Plays a role in 16S rRNA processing and 30S ribosomal subunit biogenesis and possibly also in cell cycle regulation and energy metabolism. The polypeptide is GTPase Era (Bradyrhizobium diazoefficiens (strain JCM 10833 / BCRC 13528 / IAM 13628 / NBRC 14792 / USDA 110)).